The primary structure comprises 382 residues: Na(+)/H(+) antiporter NhaA 2 (382 aa).

11 consecutive transmembrane segments (helical) span residues 8–28 (FFSSPAAGGIVLIIASAAAII), 49–69 (LSVEHWINDALMAVFFMMVGL), 87–107 (ALPGFAALGGMAVPAAIYVWF), 115–135 (LAGWAIPAATDIAFALGVLAL), 146–166 (IFLSALAILDDMGAVAIIALF), 169–189 (SNISFLMLAGAAVTVALLFIM), 209–229 (FFMLQSGVHATIAGILLALFI), 252–272 (WVTFLILPLFGFANAGVALSG), 286–306 (VALGLFVGKQAGIFGLSLLAV), 325–345 (VSVLCGIGFTMSLFIGNLAFA), and 353–373 (EVKVGVLAGSVLAALAGMLIL).

Belongs to the NhaA Na(+)/H(+) (TC 2.A.33) antiporter family.

It is found in the cell inner membrane. The catalysed reaction is Na(+)(in) + 2 H(+)(out) = Na(+)(out) + 2 H(+)(in). Functionally, na(+)/H(+) antiporter that extrudes sodium in exchange for external protons. The protein is Na(+)/H(+) antiporter NhaA 2 of Klebsiella pneumoniae subsp. pneumoniae (strain ATCC 700721 / MGH 78578).